Consider the following 390-residue polypeptide: Zinc transporter 7-B (390 aa).

Residues 1–37 lie on the Cytoplasmic side of the membrane; the sequence is MLPLSIKDDEYKPPKFNLVRKVSGWIRSIFSDSTSRN. Residues 38–58 traverse the membrane as a helical segment; that stretch reads LFCFLCLNLSFAFVELFYGIW. The Lumenal portion of the chain corresponds to 59-67; sequence SNSLGLISD. A helical membrane pass occupies residues 68-88; the sequence is SFHMFFDCTALLAGLAASVIS. The Cytoplasmic portion of the chain corresponds to 89-102; sequence RWKTNETFSYGYVR. The helical transmembrane segment at 103–123 threads the bilayer; sequence AEVLAGFVNGLFLIFTAFFIF. Residues 124–140 lie on the Lumenal side of the membrane; sequence SEGIERALDTPEVHHER. A helical membrane pass occupies residues 141–161; it reads LLPVSIMGFLVNLIGIFVFQH. Positions 161–226 are his-rich loop; that stretch reads HGGGHGHSHE…GHDHSHKHGH (66 aa). At 162 to 250 the chain is on the cytoplasmic side; it reads GGGHGHSHES…KGSSKQILEG (89 aa). The disordered stretch occupies residues 166–243; it reads GHSHESGHGH…DEPPEENKGS (78 aa). Basic residues predominate over residues 187–201; the sequence is GHSHSHGGGHGHSHG. Basic and acidic residues-rich tracts occupy residues 202–218 and 232–242; these read GGHE…EHGH and CHDEPPEENKG. A helical transmembrane segment spans residues 251–271; it reads VFLHIVADALGSVGVIISTIL. At 272–276 the chain is on the lumenal side; that stretch reads MQQYG. The chain crosses the membrane as a helical span at residues 277 to 297; it reads LMIADPICSMLIALLIFVSVI. Topologically, residues 298-390 are cytoplasmic; that stretch reads PLLKQSIGIL…LYVQIDLAAM (93 aa).

Belongs to the cation diffusion facilitator (CDF) transporter (TC 2.A.4) family. SLC30A subfamily. In terms of assembly, homooligomer.

The protein localises to the golgi apparatus membrane. It is found in the cytoplasmic vesicle. The protein resides in the golgi apparatus. Its subcellular location is the trans-Golgi network. It localises to the sarcoplasmic reticulum. The protein localises to the mitochondrion. It catalyses the reaction Zn(2+)(in) = Zn(2+)(out). Zinc ion transporter mediating zinc entry from the cytosol into the lumen of organelles along the secretory pathway. By contributing to zinc ion homeostasis within the early secretory pathway, regulates the activation and folding of enzymes like alkaline phosphatases. This chain is Zinc transporter 7-B (slc30a7-b), found in Xenopus laevis (African clawed frog).